A 499-amino-acid polypeptide reads, in one-letter code: Zinc finger protein PLAG1 (499 aa).

The disordered stretch occupies residues 1–33 (MATVIPGDLSEVRDTQKAPSGKRKRGESKPRKN). The interaction with KPNA2 stretch occupies residues 2–84 (ATVIPGDLSE…SKYKLQRHMA (83 aa)). The Nuclear localization signal signature appears at 22 to 25 (KRKR). 7 consecutive C2H2-type zinc fingers follow at residues 34-56 (FPCQ…SFSH), 62-86 (YKCT…MATH), 92-114 (HKCN…LHTH), 121-143 (FKCE…LALH), 150-172 (LTCK…LKSH), 185-207 (HQCE…MVVH), and 213-236 (FLCQ…KKSH). Residues 41 to 242 (KAFNSVEKLK…KKSHNQELLK (202 aa)) are decreased nuclear import with localization in the nucleus but also in the cytoplasm. A repression domain; contains 3 sumoylation motifs and massively decrease transcription activity region spans residues 243–383 (VKTEPVDFLD…SPASSSKLGL (141 aa)). Residues 243–499 (VKTEPVDFLD…TLPRFHQAFQ (257 aa)) are activates transcription; Inhibition of nuclear import due to lack of NLS and KPNA2 interaction. Glycyl lysine isopeptide (Lys-Gly) (interchain with G-Cter in SUMO) cross-links involve residues K244 and K263. Over residues 365 to 379 (GGAPSSSQDSPASSS) the composition is skewed to low complexity. The tract at residues 365–400 (GGAPSSSQDSPASSSKLGLEPQSGSPDDGAGDLSLS) is disordered. The tract at residues 384 to 499 (EPQSGSPDDG…TLPRFHQAFQ (116 aa)) is massively activates transcription.

Belongs to the krueppel C2H2-type zinc-finger protein family. Interacts with KPNA2, which escorts protein to the nucleus via interaction with nuclear localization signal. Interacts with E3 SUMO-protein ligase PIAS1, PIAS2 and PIAS4. In terms of processing, sumoylated with SUMO1; which inhibits transcriptional activity, but does not affect nuclear localization. Blockers of sumoylation pathway such as SENP3 and inactive UBE2I increases transcriptional capacity. Sumoylation is increased in the presence of PIAS1. Acetylated by lysine acetyltransferase EP300; which activates transcriptional capacity. Lysine residues that are sumoylated also seem to be target for acetylation. Expressed in heart, spleen, lung, kidney, brain, testis and epididymis but not in salivary glands.

The protein resides in the nucleus. In terms of biological role, transcription factor whose activation results in up-regulation of target genes, such as IGFII, leading to uncontrolled cell proliferation: when overexpressed in cultured cells, higher proliferation rate and transformation are observed. Other target genes such as CRLF1, CRABP2, CRIP2, PIGF are strongly induced in cells with PLAG1 induction. Proto-oncogene whose ectopic expression can trigger the development of pleomorphic adenomas of the salivary gland and lipoblastomas. Cooperates with CBFB-MYH11. This chain is Zinc finger protein PLAG1 (Plag1), found in Mus musculus (Mouse).